The following is a 271-amino-acid chain: Phosphonoacetaldehyde hydrolase (271 aa).

The Nucleophile role is filled by Asp-12. Positions 12 and 14 each coordinate Mg(2+). The Schiff-base intermediate with substrate role is filled by Lys-54. Residue Asp-188 coordinates Mg(2+).

Belongs to the HAD-like hydrolase superfamily. PhnX family. In terms of assembly, homodimer. Requires Mg(2+) as cofactor.

It carries out the reaction phosphonoacetaldehyde + H2O = acetaldehyde + phosphate + H(+). Involved in phosphonate degradation. The protein is Phosphonoacetaldehyde hydrolase of Vibrio parahaemolyticus serotype O3:K6 (strain RIMD 2210633).